The sequence spans 163 residues: 6,7-dimethyl-8-ribityllumazine synthase (163 aa).

Residues Phe-27, 58-60 (ALE), and 87-89 (CVV) each bind 5-amino-6-(D-ribitylamino)uracil. 92-93 (DT) is a binding site for (2S)-2-hydroxy-3-oxobutyl phosphate. The active-site Proton donor is the His-95. Residue Asn-120 participates in 5-amino-6-(D-ribitylamino)uracil binding. Arg-134 serves as a coordination point for (2S)-2-hydroxy-3-oxobutyl phosphate.

Belongs to the DMRL synthase family.

The catalysed reaction is (2S)-2-hydroxy-3-oxobutyl phosphate + 5-amino-6-(D-ribitylamino)uracil = 6,7-dimethyl-8-(1-D-ribityl)lumazine + phosphate + 2 H2O + H(+). It functions in the pathway cofactor biosynthesis; riboflavin biosynthesis; riboflavin from 2-hydroxy-3-oxobutyl phosphate and 5-amino-6-(D-ribitylamino)uracil: step 1/2. In terms of biological role, catalyzes the formation of 6,7-dimethyl-8-ribityllumazine by condensation of 5-amino-6-(D-ribitylamino)uracil with 3,4-dihydroxy-2-butanone 4-phosphate. This is the penultimate step in the biosynthesis of riboflavin. The sequence is that of 6,7-dimethyl-8-ribityllumazine synthase from Nitrobacter hamburgensis (strain DSM 10229 / NCIMB 13809 / X14).